The chain runs to 53 residues: MQKFECTLCGYIYDPALVGPDTPDQDGAFEDVSENWVCPLCGAGKEDFEVYED.

Residues 1-53 form the Rubredoxin-like domain; that stretch reads MQKFECTLCGYIYDPALVGPDTPDQDGAFEDVSENWVCPLCGAGKEDFEVYED. Fe cation is bound by residues cysteine 6, cysteine 9, cysteine 38, and cysteine 41.

It belongs to the rubredoxin family. Requires Fe(3+) as cofactor.

In terms of biological role, rubredoxin is a small nonheme, iron protein lacking acid-labile sulfide. Its single Fe, chelated to 4 Cys, functions as an electron acceptor and may also stabilize the conformation of the molecule. The polypeptide is Rubredoxin (Peptoniphilus asaccharolyticus (Peptostreptococcus asaccharolyticus)).